We begin with the raw amino-acid sequence, 476 residues long: Replication factor C large subunit (476 aa).

Gly-50 to Thr-57 lines the ATP pocket. The interval Tyr-447–Asp-476 is disordered. The segment covering Lys-452 to Lys-461 has biased composition (basic residues).

Belongs to the activator 1 small subunits family. RfcL subfamily. In terms of assembly, heteromultimer composed of small subunits (RfcS) and large subunits (RfcL).

Functionally, part of the RFC clamp loader complex which loads the PCNA sliding clamp onto DNA. This Ignicoccus hospitalis (strain KIN4/I / DSM 18386 / JCM 14125) protein is Replication factor C large subunit.